A 201-amino-acid chain; its full sequence is 5'(3')-deoxyribonucleotidase, cytosolic type (201 aa).

Asp10 acts as the Nucleophile in catalysis. Positions 10 and 12 each coordinate Mg(2+). Residue Asp12 is the Proton donor of the active site. Residues Phe18, Phe44, Tyr65, Thr99, and Lys134 each contribute to the substrate site. Asp145 is a binding site for Mg(2+). Ser182 carries the post-translational modification Phosphoserine.

Belongs to the 5'(3')-deoxyribonucleotidase family. In terms of assembly, homodimer. The cofactor is Mg(2+). In terms of tissue distribution, detected in skeletal muscle, heart and pancreas.

The protein localises to the cytoplasm. Functionally, dephosphorylates the 5' and 2'(3')-phosphates of deoxyribonucleotides, with a preference for dUMP and dTMP, intermediate activity towards dGMP, and low activity towards dCMP and dAMP. The chain is 5'(3')-deoxyribonucleotidase, cytosolic type (NT5C) from Homo sapiens (Human).